The primary structure comprises 282 residues: Shikimate dehydrogenase (NADP(+)) (282 aa).

Shikimate is bound by residues 15-17 (SKS) and T62. The active-site Proton acceptor is the K66. Residues N87 and D103 each coordinate shikimate. NADP(+)-binding positions include 127-131 (GAGGA), 151-156 (NRTHTK), and M220. Shikimate is bound at residue Y222. NADP(+) is bound at residue G244.

This sequence belongs to the shikimate dehydrogenase family. In terms of assembly, homodimer.

It catalyses the reaction shikimate + NADP(+) = 3-dehydroshikimate + NADPH + H(+). It participates in metabolic intermediate biosynthesis; chorismate biosynthesis; chorismate from D-erythrose 4-phosphate and phosphoenolpyruvate: step 4/7. Functionally, involved in the biosynthesis of the chorismate, which leads to the biosynthesis of aromatic amino acids. Catalyzes the reversible NADPH linked reduction of 3-dehydroshikimate (DHSA) to yield shikimate (SA). In Shewanella baltica (strain OS223), this protein is Shikimate dehydrogenase (NADP(+)).